The chain runs to 154 residues: Hemiasterlin resistant protein 1 (154 aa).

2 disordered regions span residues 1 to 64 and 86 to 109; these read MVRR…PGLM and GMFT…PAGA. Low complexity-rich tracts occupy residues 7 to 28, 48 to 57, and 96 to 109; these read ASPS…SSFA, TPMGAPMGAP, and AEQA…PAGA. One can recognise a CHCH domain in the interval 116-154; it reads SQPCEFEWRQFVDCAQNQSDVSLCNGFNDIFKQCKARYA. Short sequence motifs (cx9C motif) lie at residues 119 to 129 and 139 to 149; these read CEFEWRQFVDC and CNGFNDIFKQC. 2 disulfides stabilise this stretch: Cys119-Cys149 and Cys129-Cys139.

The chain is Hemiasterlin resistant protein 1 (har-1) from Caenorhabditis elegans.